A 549-amino-acid chain; its full sequence is MLNQKIQNPNPDELMIEVDLCYELDPYELKLDEMIEAEPEPEMIEGLPASDALTPADRYLELFEHVQSAKIFPDSKTFPDCAPKMDPLDILIRYRKVRRHRDFDLRKFVENHFWLPEVYSSEYVSDPQNSLKEHIDQLWPVLTREPQDHIPWSSLLALPQSYIVPGGRFSETYYWDSYFTMLGLAESGREDLLKCMADNFAWMIENYGHIPNGNRTYYLSRSQPPVFALMVELFEEDGVRGARRYLDHLKMEYAFWMDGAESLIPNQAYRHVVRMPDGSLLNRYWDDRDTPRDESWLEDVETAKHSGCPPNEVYRDLRAGAASGWDYSSRWLRDTGRLASIRTTQFIPIDLNAFLFKLESAIANISALKGEKETEALFRQKASARRDAVNRYLWDDENGIYRDYDWRREQLALFSAAAIVPLYVGMANHEQADRLANAVRSRLLTPGGILASEYETGEQWDKPNGWAPLQWMAIQGFKMYGDDLLGDEIARSWLKTVNQFYLEQHKMIEKYHIADGVPREGGGGEYPLQDGFGWTNGVVRRLIGLYGEP.

Residues Arg-168, 175–176 (WD), Asn-212, 221–223 (RSQ), 292–294 (RDE), and Gly-324 each bind substrate. Active-site proton donor/acceptor residues include Asp-326 and Glu-509. Glu-525 is a binding site for substrate.

Belongs to the glycosyl hydrolase 37 family. In terms of assembly, monomer.

It localises to the cytoplasm. The catalysed reaction is alpha,alpha-trehalose + H2O = alpha-D-glucose + beta-D-glucose. It functions in the pathway glycan degradation; trehalose degradation; D-glucose from alpha,alpha-trehalose: step 1/1. Functionally, hydrolyzes trehalose to glucose. Could be involved, in cells returning to low osmolarity conditions, in the utilization of the accumulated cytoplasmic trehalose, which was synthesized in response to high osmolarity. The chain is Cytoplasmic trehalase from Shigella flexneri serotype 5b (strain 8401).